Here is a 252-residue protein sequence, read N- to C-terminus: Ureidoacrylate amidohydrolase RutB (252 aa).

Residues 1 to 14 (MSTPARNTTLTSNT) are compositionally biased toward polar residues. The segment at 1 to 31 (MSTPARNTTLTSNTPAGAPRLPGAPAPQVLP) is disordered. Residues 15 to 27 (PAGAPRLPGAPAP) are compositionally biased toward low complexity. D50 (proton acceptor) is an active-site residue. K159 is an active-site residue. C192 (nucleophile) is an active-site residue.

It belongs to the isochorismatase family. RutB subfamily.

It carries out the reaction (Z)-3-ureidoacrylate + H2O + H(+) = (Z)-3-aminoacrylate + NH4(+) + CO2. The enzyme catalyses (Z)-3-ureidoacrylate + H2O = (Z)-3-aminoacrylate + carbamate + H(+). It catalyses the reaction (Z)-2-methylureidoacrylate + H2O + H(+) = (Z)-2-methylaminoacrylate + NH4(+) + CO2. Its function is as follows. Hydrolyzes ureidoacrylate to form aminoacrylate and carbamate. The carbamate hydrolyzes spontaneously, thereby releasing one of the nitrogen atoms of the pyrimidine ring as ammonia and one of its carbon atoms as CO2. The polypeptide is Ureidoacrylate amidohydrolase RutB (Variovorax paradoxus (strain S110)).